A 109-amino-acid chain; its full sequence is uncharacterized protein (109 aa).

Residues 82-102 form a helical membrane-spanning segment; the sequence is SLSFLLLLFFYFNNYYFLSMT.

The protein resides in the membrane. This is an uncharacterized protein from Saccharomyces cerevisiae (strain ATCC 204508 / S288c) (Baker's yeast).